Here is a 490-residue protein sequence, read N- to C-terminus: 5-hydroxytryptamine receptor 3A (490 aa).

A signal peptide spans 1–19; that stretch reads MVLWLQLALLALLLPTSLA. The Extracellular segment spans residues 20-249; it reads QGEVRGKGTA…FYVVIRRRPL (230 aa). N-linked (GlcNAc...) asparagine glycosylation is found at Asn-33, Asn-109, Asn-175, and Asn-191. The cysteines at positions 162 and 176 are disulfide-linked. Residues 250–270 form a helical membrane-spanning segment; the sequence is FYAVTLLLPSIFLMIVDIVGF. Residues 271-285 lie on the Cytoplasmic side of the membrane; that stretch reads YLPPDSGERVSFKIT. The helical transmembrane segment at 286-306 threads the bilayer; that stretch reads LLLGYSVFLIIVSDTLPATAI. Over 307-312 the chain is Extracellular; sequence GTPLIS. The helical transmembrane segment at 313-333 threads the bilayer; the sequence is VYFVVCMALLVISLAETILIV. Topologically, residues 334–467 are cytoplasmic; sequence RLVHKQDLQQ…GSVLDKLLFR (134 aa). Residues 401–422 form a disordered region; sequence GGPQDLEKTSRGRGSPPPPPRE. Residues 426–462 are HA-stretch; determines single-channel conductance in 5-HT3 receptors; sequence AMCGLLQELASIRHFLEKREETREVARDWLRVGSVLD. Residues 468–488 traverse the membrane as a helical segment; that stretch reads VYLLAVLAYSITLVTLWSVWH. The Extracellular segment spans residues 489-490; sequence YA.

Belongs to the ligand-gated ion channel (TC 1.A.9) family. 5-hydroxytryptamine receptor (TC 1.A.9.2) subfamily. HTR3A sub-subfamily. Forms homopentameric as well as heteropentameric serotonin-activated cation-selective channel complexes with HTR3B or HTR3C or HTR3D or HTR3E. The homomeric complex is functional but exhibits low conductance with modified voltage dependence, and decreased agonist and antagonist affinity. Heteropentameric complexes display properties which resemble that of neuronal serotonin-activated channels in vivo. Interacts with RIC3. Expressed in cortex, intestine and liver. Not expressed in muscle or spleen.

Its subcellular location is the postsynaptic cell membrane. The protein localises to the cell membrane. The catalysed reaction is Na(+)(in) = Na(+)(out). It catalyses the reaction K(+)(in) = K(+)(out). The enzyme catalyses Ca(2+)(in) = Ca(2+)(out). It carries out the reaction Mg(2+)(in) = Mg(2+)(out). Forms serotonin (5-hydroxytryptamine/5-HT3)-activated cation-selective channel complexes, which when activated cause fast, depolarizing responses in neurons. The protein is 5-hydroxytryptamine receptor 3A of Cavia porcellus (Guinea pig).